Reading from the N-terminus, the 357-residue chain is MGCFFSKRRKPAQGGQQQGASQEPAAGEEKAPQYSWDQRAKVDPKDYTFSGLKDETVGRLPGRVAGQQFVIQDCENCSIYIFDHSATVTIDDCVNCQIFLGPIKGSVFFRNCKDCKCIVACQQFRTRDCRRLEVFLCCATQPIIESSTGMKFGCFQYYYPELALQFKDAGLSIFNNTWSNIHDFTPVSGENNWGLLPENAVVQDYVPLPASEELKAVRVSTDAMKSIIPITRGQRQKNSDESCLAVFFAGDYTTANARKLIDEMTGKGFQLVQTKEVSMKAEDAQRVFQQCASEFIPLLERGPVVALEFNGDGAVEGCRNTVNDVFNGTKVFVSESKASASQDVDNFYNFADMQMGM.

A compositionally biased stretch (basic residues) spans 1–11 (MGCFFSKRRKP). The segment at 1–39 (MGCFFSKRRKPAQGGQQQGASQEPAAGEEKAPQYSWDQR) is disordered. Gly2 carries the N-myristoyl glycine lipid modification. Cys3 is lipidated: S-palmitoyl cysteine. Low complexity predominate over residues 12–25 (AQGGQQQGASQEPA). The 155-residue stretch at 32–186 (PQYSWDQRAK…TWSNIHDFTP (155 aa)) folds into the C-CAP/cofactor C-like domain. Residues 105 to 106 (GS) and 122 to 125 (QQFR) contribute to the GTP site.

The protein belongs to the TBCC family. Post-translationally, myristoylated on Gly-2; which may be required for membrane targeting. Palmitoylated on Cys-3; which may be required for plasma membrane targeting.

It is found in the cell membrane. Its function is as follows. Acts as a GTPase-activating protein (GAP) for tubulin in concert with tubulin-specific chaperone C, but does not enhance tubulin heterodimerization. Acts as a GTPase-activating protein. May act as guanine nucleotide dissociation inhibitor towards ADP-ribosylation factor-like proteins. This Gallus gallus (Chicken) protein is Protein XRP2 (RP2).